The primary structure comprises 157 residues: DFPPNTCCCICCFIDRMYQQNHFIISSNSNSSNQNKLVSSLEGKVWVQDVPSLHLLRFFLYEYRNWNSFITPKKCESMFVFLRDPFIHYVRYQAKSFLAARGTPLMMNKSQMLENSFLIDIAINKAKFCNALGHPISKPVRVWYLDIIRINDLVNHD.

Belongs to the intron maturase 2 family. MatK subfamily. As to quaternary structure, monomer. Glycosylated. In terms of tissue distribution, accumulates in latex (at protein level).

Inhibited by HgCl(2), iodoacetamide (IAA) and, to a far lesser extent, by SDS, hydrogen peroxide H(1)O(2), KCl, NaCl, ZnCl(2), AgSO(4), CdCl(2), FeCl(3), PMSF, Pepstatin A and EDTA. Repressed moderately by many organic solvents such as diethyl ether, ethy lacetate, acetophenone, butanol, trichloroethylene, tetrahydrofuran, methanol, chloroform and dichloromethane, and, to a lesser extent, by propanol, benzyl alcohol and chlorobenzene. In terms of biological role, cysteine protease inducing milk clotting by cleaving casein. Exhibits biomedical activities such as wound healing, haemostatic and antibacterial activity, as well as agricultural application in biocontrol process against the infectious management of the root knot nematode Meloidogyne incognita. In Euphorbia nivulia (Leafy milk hedge), this protein is Cysteine protease Nivulian-2.